We begin with the raw amino-acid sequence, 238 residues long: Ditrans,polycis-undecaprenyl-diphosphate synthase ((2E,6E)-farnesyl-diphosphate specific) (238 aa).

Asp14 is a catalytic residue. Residue Asp14 participates in Mg(2+) binding. Substrate contacts are provided by residues 15–18 (GNGR), Trp19, Arg27, His31, and 59–61 (SSE). Asn62 serves as the catalytic Proton acceptor. Substrate is bound by residues Trp63, Arg65, Arg182, and 188–190 (RIS). Glu201 is a Mg(2+) binding site.

Belongs to the UPP synthase family. In terms of assembly, homodimer. The cofactor is Mg(2+).

It carries out the reaction 8 isopentenyl diphosphate + (2E,6E)-farnesyl diphosphate = di-trans,octa-cis-undecaprenyl diphosphate + 8 diphosphate. Catalyzes the sequential condensation of isopentenyl diphosphate (IPP) with (2E,6E)-farnesyl diphosphate (E,E-FPP) to yield (2Z,6Z,10Z,14Z,18Z,22Z,26Z,30Z,34E,38E)-undecaprenyl diphosphate (di-trans,octa-cis-UPP). UPP is the precursor of glycosyl carrier lipid in the biosynthesis of bacterial cell wall polysaccharide components such as peptidoglycan and lipopolysaccharide. The sequence is that of Ditrans,polycis-undecaprenyl-diphosphate synthase ((2E,6E)-farnesyl-diphosphate specific) from Legionella pneumophila (strain Paris).